The primary structure comprises 339 residues: UDP-glucose 4-epimerase (339 aa).

NAD(+)-binding positions include 12–13 (FI), 32–37 (DNLCNS), 59–60 (DI), 81–85 (FAGLK), N100, S125, Y150, K154, and F179. Residues S125 and Y150 each coordinate substrate. The Proton acceptor role is filled by Y150. Substrate is bound by residues N180, 200 to 201 (NL), 217 to 219 (AVF), R232, and 293 to 296 (RAGD).

This sequence belongs to the NAD(P)-dependent epimerase/dehydratase family. In terms of assembly, homodimer. NAD(+) serves as cofactor.

The catalysed reaction is UDP-alpha-D-glucose = UDP-alpha-D-galactose. It participates in carbohydrate metabolism; galactose metabolism. Its function is as follows. Involved in the metabolism of galactose. Plays an essential role in the incorporation of galactose into meningococcal lipopolysaccharide surface molecules, which are important for pathogenesis. Catalyzes the conversion of UDP-galactose (UDP-Gal) to UDP-glucose (UDP-Glc) through a mechanism involving the transient reduction of NAD. In Neisseria meningitidis serogroup C, this protein is UDP-glucose 4-epimerase (galE).